The primary structure comprises 242 residues: Prosalusin (242 aa).

Residues 1 to 26 (MAAATRSCRPWGSLLGLIWLVSAAAA) form the signal peptide. Positions 27-189 (SWDLSSLRCN…SSWVVYGTNY (163 aa)) are excised as a propeptide. 93–100 (GWTGTGKS) contributes to the ATP binding site. N-linked (GlcNAc...) asparagine glycosylation occurs at N149.

This sequence belongs to the ClpA/ClpB family. Torsin subfamily.

Its subcellular location is the secreted. Salusin may be a endocrine and/or paracrine factor able to increase intracellular calcium concentrations and induce cell mitogenesis. Salusin may also be a potent hypotensive peptide. The polypeptide is Prosalusin (TOR2A) (Bos taurus (Bovine)).